A 398-amino-acid chain; its full sequence is Cation channel sperm-associated protein 3 (398 aa).

The Cytoplasmic portion of the chain corresponds to 1–48; that stretch reads MSQHRHQRHSRVISSSPVDTTSVGFCPTFKKFKRNDDECRAFVKRVIM. The chain crosses the membrane as a helical span at residues 49 to 71; the sequence is SRFFKIIMISTVTSNAFFMALWT. The Extracellular segment spans residues 72 to 80; sequence SYDIRYRLF. Residues 81–107 form a helical membrane-spanning segment; it reads RLLEFSEIFFVSICTSELSMKVYVDPI. Position 108 (N108) is a topological domain, cytoplasmic. The helical transmembrane segment at 109-131 threads the bilayer; sequence YWKNGYNLLDVIIIIVMFLPYAL. Residues 132-143 lie on the Extracellular side of the membrane; it reads RQLMGKQFTYLY. A helical transmembrane segment spans residues 144-160; that stretch reads IADGMQSLRILKLIGYS. The Cytoplasmic portion of the chain corresponds to 161-168; it reads QGIRTLIT. A helical transmembrane segment spans residues 169–195; sequence AVGQTVYTVASVLLLLFLLMYIFAILG. At 196–216 the chain is on the extracellular side; it reads FCLFGSPDNGDHDNWGNLAAA. The segment at residues 217 to 236 is an intramembrane region (helical; Pore-forming); it reads FFTLFSLATVDGWTDLQKQL. At 237–242 the chain is on the extracellular side; the sequence is DNREFA. Residues 243–268 form a helical membrane-spanning segment; that stretch reads LSRAFTIIFILLASFIFLNMFVGVMI. At 269–398 the chain is on the cytoplasmic side; it reads MHTEDSIRKF…PQSLEKVDEK (130 aa).

Belongs to the cation channel sperm-associated (TC 1.A.1.19) family. In terms of assembly, component of the CatSper complex or CatSpermasome composed of the core pore-forming members CATSPER1, CATSPER2, CATSPER3 and CATSPER4 as well as auxiliary members CATSPERB, CATSPERG, CATSPERD, CATSPERE, CATSPERZ, C2CD6/CATSPERT, TMEM249, TMEM262 and EFCAB9. HSPA1 may be an additional auxiliary complex member. The core complex members CATSPER1, CATSPER2, CATSPER3 and CATSPER4 form a heterotetrameric channel. The auxiliary CATSPERB, CATSPERG, CATSPERD and CATSPERE subunits form a pavilion-like structure over the pore which stabilizes the complex through interactions with CATSPER4, CATSPER3, CATSPER1 and CATSPER2 respectively. TMEM262/CATSPERH interacts with CATSPERB, further stabilizing the complex. C2CD6/CATSPERT interacts at least with CATSPERD and is required for targeting the CatSper complex in the flagellar membrane. Testis-specific.

It localises to the cell projection. The protein localises to the cilium. Its subcellular location is the flagellum membrane. It carries out the reaction Ca(2+)(in) = Ca(2+)(out). Its activity is regulated as follows. The CatSper calcium channel is indirectly activated by extracellular progesterone and prostaglandins following the sequence: progesterone &gt; PGF1-alpha = PGE1 &gt; PGA1 &gt; PGE2 &gt;&gt; PGD2. The CatSper calcium channel is directly inhibited by endocannabinoid 2-arachidonoylglycerol (2AG). Indirect activation by progesterone takes place via the following mechanism: progesterone binds and activates the acylglycerol lipase ABHD2, which in turn mediates hydrolysis of 2AG inhibitor, relieving inhibition of the CatSper channel. The primary effect of progesterone activation is to shift voltage dependence towards more physiological, negative membrane potentials; it is not mediated by metabotropic receptors and second messengers. Sperm capacitation enhances the effect of progesterone by providing additional negative shift. Also activated by the elevation of intracellular pH. In terms of biological role, pore-forming subunit of the CatSper complex, a sperm-specific voltage-gated calcium channel that plays a central role in calcium-dependent physiological responses essential for successful fertilization, such as sperm hyperactivation, acrosome reaction and chemotaxis towards the oocyte. The protein is Cation channel sperm-associated protein 3 (CATSPER3) of Homo sapiens (Human).